We begin with the raw amino-acid sequence, 392 residues long: Glucan endo-1,3-beta-glucosidase 14 (392 aa).

The N-terminal stretch at 1 to 21 (MATHSLSFFFRVLLLLFLTLS) is a signal peptide. Residues asparagine 54 and asparagine 89 are each glycosylated (N-linked (GlcNAc...) asparagine). The Proton donor role is filled by glutamate 122. The Nucleophile role is filled by glutamate 267. Serine 359 is lipidated: GPI-anchor amidated serine. The propeptide at 360–392 (RATTIKILNLWRVVMGLAVAWFILDMGDKMRMR) is removed in mature form.

It belongs to the glycosyl hydrolase 17 family.

The protein resides in the cell membrane. It localises to the secreted. Its subcellular location is the cell wall. It is found in the cytoplasm. It carries out the reaction Hydrolysis of (1-&gt;3)-beta-D-glucosidic linkages in (1-&gt;3)-beta-D-glucans.. This Arabidopsis thaliana (Mouse-ear cress) protein is Glucan endo-1,3-beta-glucosidase 14.